Reading from the N-terminus, the 410-residue chain is Meiotic driver wtf18 (410 aa).

A disordered region spans residues 1–39 (MKNKGYPLRSSMDELSTKNDNEIDLEKGPLPEYNSEDGS). Positions 11–29 (SMDELSTKNDNEIDLEKGP) are enriched in basic and acidic residues. Transmembrane regions (helical) follow at residues 89–109 (LLIS…CVNP), 119–139 (AFFV…FCFF), 149–169 (CIKV…VFLA), 174–194 (VTAV…AKCI), 204–224 (CVKV…VGLY), 229–249 (DLVV…FGCV), 265–285 (CSIS…IWTL), 289–309 (LFGL…TKGL), 319–339 (ATGY…LFFY), and 353–373 (FIGN…GGIG).

Belongs to the WTF family. Homomer. Forms protein aggregates. The two isoforms can interact with each other and with themselves. High sequence similarity is required for their interaction.

The protein localises to the spore membrane. Its subcellular location is the vacuole membrane. The protein resides in the ascus epiplasm. It localises to the cytoplasm. It is found in the endoplasmic reticulum membrane. In terms of biological role, promotes unequal transmission of alleles from the parental zygote to progeny spores by acting as poison/antidote system where the poison and antidote proteins are produced from the same locus; the poison component is trans-acting and targets all spores within an ascus whereas the antidote component is spore-specific, leading to poisoning of all progeny that do not inherit the allele. Localizes isoform 2 to the vacuole thereby facilitating its degradation. In addition to suppressing isoform 2, also suppresses S.pombe strain 972 wtf13 isoform 2. Functionally, forms toxic aggregates that disrupt spore maturation. In Schizosaccharomyces pombe (Fission yeast), this protein is Meiotic driver wtf18.